A 1375-amino-acid polypeptide reads, in one-letter code: Capping protein, Arp2/3 and myosin-I linker protein 3 (1375 aa).

The disordered stretch occupies residues 124–151 (IRRGNADTPEGPRDTSPNSETSTSTTHS). Positions 138 to 151 (TSPNSETSTSTTHS) are enriched in low complexity. 10 LRR repeats span residues 244–264 (SLEE…QKLA), 274–295 (VLHA…SLSQ), 303–323 (GLTK…QALG), 335–357 (SLRY…NALY), 365–386 (ALVH…GALL), 392–413 (HLTY…EAPP), 424–444 (TLSH…RALL), 455–475 (DLHL…ALQE), 482–501 (CIGS…LTLV), and 509–530 (SLKH…EEIL). 2 disordered regions span residues 864-901 (RTLS…GTNI) and 969-1375 (KLRH…PGTD). Over residues 981–997 (PRTTPPGPGRPSVPVPG) the composition is skewed to pro residues. A compositionally biased stretch (basic and acidic residues) spans 1007-1022 (RLDEGLEDFFSRRVMD). A compositionally biased stretch (basic residues) spans 1047 to 1062 (QKKRRRGLFHFRRPRS). The segment covering 1078–1097 (LPPPPPPPPTQESPPSPDPP) has biased composition (pro residues). Residues 1098-1108 (SLGNNSSPCWS) show a composition bias toward low complexity. A compositionally biased stretch (basic and acidic residues) spans 1219-1229 (RRAEATWHIAE). A compositionally biased stretch (polar residues) spans 1233 to 1244 (ANHSCQSPSPAS). A compositionally biased stretch (pro residues) spans 1272 to 1281 (PIGPRPPKPV). The span at 1348 to 1360 (QSCDKLEPDRRQP) shows a compositional bias: basic and acidic residues.

Belongs to the CARMIL family.

The protein resides in the cytoplasm. It is found in the cell membrane. The polypeptide is Capping protein, Arp2/3 and myosin-I linker protein 3 (Carmil3) (Mus musculus (Mouse)).